We begin with the raw amino-acid sequence, 379 residues long: Carbamoyl phosphate synthase small chain (379 aa).

Residues 1 to 183 are CPSase; that stretch reads MTSQDRSEAV…EAYVVEPDGE (183 aa). Residues Ser-51, Gly-235, and Gly-237 each coordinate L-glutamine. Residues 185-379 form the Glutamine amidotransferase type-1 domain; the sequence is LYTVVAYDMG…FVELIQANKK (195 aa). Cys-263 acts as the Nucleophile in catalysis. Positions 264, 267, 305, 307, and 308 each coordinate L-glutamine. Catalysis depends on residues His-353 and Glu-355.

The protein belongs to the CarA family. In terms of assembly, composed of two chains; the small (or glutamine) chain promotes the hydrolysis of glutamine to ammonia, which is used by the large (or ammonia) chain to synthesize carbamoyl phosphate. Tetramer of heterodimers (alpha,beta)4.

It catalyses the reaction hydrogencarbonate + L-glutamine + 2 ATP + H2O = carbamoyl phosphate + L-glutamate + 2 ADP + phosphate + 2 H(+). The enzyme catalyses L-glutamine + H2O = L-glutamate + NH4(+). It functions in the pathway amino-acid biosynthesis; L-arginine biosynthesis; carbamoyl phosphate from bicarbonate: step 1/1. The protein operates within pyrimidine metabolism; UMP biosynthesis via de novo pathway; (S)-dihydroorotate from bicarbonate: step 1/3. Functionally, small subunit of the glutamine-dependent carbamoyl phosphate synthetase (CPSase). CPSase catalyzes the formation of carbamoyl phosphate from the ammonia moiety of glutamine, carbonate, and phosphate donated by ATP, constituting the first step of 2 biosynthetic pathways, one leading to arginine and/or urea and the other to pyrimidine nucleotides. The small subunit (glutamine amidotransferase) binds and cleaves glutamine to supply the large subunit with the substrate ammonia. The sequence is that of Carbamoyl phosphate synthase small chain from Corynebacterium diphtheriae (strain ATCC 700971 / NCTC 13129 / Biotype gravis).